A 329-amino-acid chain; its full sequence is Holliday junction branch migration complex subunit RuvB (329 aa).

The tract at residues 1-180 (MKNILQSTEC…FGIPIHLEFY (180 aa)) is large ATPase domain (RuvB-L). Residues I19, R20, G61, K64, T65, T66, 127-129 (EDF), R170, Y180, and R217 each bind ATP. T65 is a Mg(2+) binding site. Positions 181–252 (STEELIKVIQ…FADKALLRLG (72 aa)) are small ATPAse domain (RuvB-S). The segment at 255–329 (KLGLDRQDIQ…ISYLKEQSYI (75 aa)) is head domain (RuvB-H). DNA-binding residues include R308 and R313.

This sequence belongs to the RuvB family. In terms of assembly, homohexamer. Forms an RuvA(8)-RuvB(12)-Holliday junction (HJ) complex. HJ DNA is sandwiched between 2 RuvA tetramers; dsDNA enters through RuvA and exits via RuvB. An RuvB hexamer assembles on each DNA strand where it exits the tetramer. Each RuvB hexamer is contacted by two RuvA subunits (via domain III) on 2 adjacent RuvB subunits; this complex drives branch migration. In the full resolvosome a probable DNA-RuvA(4)-RuvB(12)-RuvC(2) complex forms which resolves the HJ.

The protein resides in the cytoplasm. It carries out the reaction ATP + H2O = ADP + phosphate + H(+). In terms of biological role, the RuvA-RuvB-RuvC complex processes Holliday junction (HJ) DNA during genetic recombination and DNA repair, while the RuvA-RuvB complex plays an important role in the rescue of blocked DNA replication forks via replication fork reversal (RFR). RuvA specifically binds to HJ cruciform DNA, conferring on it an open structure. The RuvB hexamer acts as an ATP-dependent pump, pulling dsDNA into and through the RuvAB complex. RuvB forms 2 homohexamers on either side of HJ DNA bound by 1 or 2 RuvA tetramers; 4 subunits per hexamer contact DNA at a time. Coordinated motions by a converter formed by DNA-disengaged RuvB subunits stimulates ATP hydrolysis and nucleotide exchange. Immobilization of the converter enables RuvB to convert the ATP-contained energy into a lever motion, pulling 2 nucleotides of DNA out of the RuvA tetramer per ATP hydrolyzed, thus driving DNA branch migration. The RuvB motors rotate together with the DNA substrate, which together with the progressing nucleotide cycle form the mechanistic basis for DNA recombination by continuous HJ branch migration. Branch migration allows RuvC to scan DNA until it finds its consensus sequence, where it cleaves and resolves cruciform DNA. This Ehrlichia canis (strain Jake) protein is Holliday junction branch migration complex subunit RuvB.